The chain runs to 203 residues: uncharacterized protein (203 aa).

The next 4 helical transmembrane spans lie at 9-29, 42-62, 86-106, and 126-146; these read YNVFVANLALVLGFMLNIVVA, FLFLTPFLGIVAASIFYFFDV, SGVFVFFANILVNVILLALLV, and YPLLWSAVGVSIFLSLISIGL. 2 stretches are compositionally biased toward basic and acidic residues: residues 164–174 and 182–191; these read GEPTAADKTDS and DQTKSKKDGD. The tract at residues 164 to 203 is disordered; that stretch reads GEPTAADKTDSRPVVVDLDQTKSKKDGDNPPQASGDMTSL. The segment covering 194–203 has biased composition (polar residues); the sequence is PQASGDMTSL.

It localises to the cell membrane. This is an uncharacterized protein from Mycoplasma pneumoniae (strain ATCC 29342 / M129 / Subtype 1) (Mycoplasmoides pneumoniae).